Reading from the N-terminus, the 33-residue chain is Protamine TP14 (33 aa).

The interval 1–33 is disordered; sequence MPRRRRSSRPPVRRRRRPRVSRRRRRRGGRRRR.

Testis.

The protein localises to the nucleus. The protein resides in the chromosome. Its function is as follows. Protamines substitute for histones in the chromatin of sperm during the haploid phase of spermatogenesis. They compact sperm DNA into a highly condensed, stable and inactive complex. The protein is Protamine TP14 of Oncorhynchus mykiss (Rainbow trout).